Reading from the N-terminus, the 378-residue chain is UDP-N-acetylglucosamine--N-acetylmuramyl-(pentapeptide) pyrophosphoryl-undecaprenol N-acetylglucosamine transferase (378 aa).

UDP-N-acetyl-alpha-D-glucosamine contacts are provided by residues threonine 14–glycine 16, asparagine 125, arginine 165, serine 193, and glutamine 293.

This sequence belongs to the glycosyltransferase 28 family. MurG subfamily.

It localises to the cell inner membrane. The catalysed reaction is di-trans,octa-cis-undecaprenyl diphospho-N-acetyl-alpha-D-muramoyl-L-alanyl-D-glutamyl-meso-2,6-diaminopimeloyl-D-alanyl-D-alanine + UDP-N-acetyl-alpha-D-glucosamine = di-trans,octa-cis-undecaprenyl diphospho-[N-acetyl-alpha-D-glucosaminyl-(1-&gt;4)]-N-acetyl-alpha-D-muramoyl-L-alanyl-D-glutamyl-meso-2,6-diaminopimeloyl-D-alanyl-D-alanine + UDP + H(+). It functions in the pathway cell wall biogenesis; peptidoglycan biosynthesis. In terms of biological role, cell wall formation. Catalyzes the transfer of a GlcNAc subunit on undecaprenyl-pyrophosphoryl-MurNAc-pentapeptide (lipid intermediate I) to form undecaprenyl-pyrophosphoryl-MurNAc-(pentapeptide)GlcNAc (lipid intermediate II). In Bartonella quintana (strain Toulouse) (Rochalimaea quintana), this protein is UDP-N-acetylglucosamine--N-acetylmuramyl-(pentapeptide) pyrophosphoryl-undecaprenol N-acetylglucosamine transferase.